Reading from the N-terminus, the 424-residue chain is UDP-N-acetylglucosamine 1-carboxyvinyltransferase (424 aa).

Residue 22–23 (KN) coordinates phosphoenolpyruvate. Arg-93 contributes to the UDP-N-acetyl-alpha-D-glucosamine binding site. Cys-117 (proton donor) is an active-site residue. Cys-117 is subject to 2-(S-cysteinyl)pyruvic acid O-phosphothioketal. Residues 122–126 (RPIDL), Asp-307, and Ile-329 each bind UDP-N-acetyl-alpha-D-glucosamine.

Belongs to the EPSP synthase family. MurA subfamily.

The protein resides in the cytoplasm. It carries out the reaction phosphoenolpyruvate + UDP-N-acetyl-alpha-D-glucosamine = UDP-N-acetyl-3-O-(1-carboxyvinyl)-alpha-D-glucosamine + phosphate. The protein operates within cell wall biogenesis; peptidoglycan biosynthesis. Its function is as follows. Cell wall formation. Adds enolpyruvyl to UDP-N-acetylglucosamine. This chain is UDP-N-acetylglucosamine 1-carboxyvinyltransferase, found in Chlorobium phaeovibrioides (strain DSM 265 / 1930) (Prosthecochloris vibrioformis (strain DSM 265)).